The chain runs to 577 residues: Arginine--tRNA ligase (577 aa).

Residues 122–132 carry the 'HIGH' region motif; that stretch reads PNVAKEMHVGH.

The protein belongs to the class-I aminoacyl-tRNA synthetase family. As to quaternary structure, monomer.

The protein resides in the cytoplasm. The enzyme catalyses tRNA(Arg) + L-arginine + ATP = L-arginyl-tRNA(Arg) + AMP + diphosphate. The chain is Arginine--tRNA ligase from Escherichia coli O9:H4 (strain HS).